Consider the following 291-residue polypeptide: Energy-coupling factor transporter ATP-binding protein EcfA2 (291 aa).

The 244-residue stretch at 3 to 246 (ITFKDVSYTY…PEWLTSKQLG (244 aa)) folds into the ABC transporter domain. 40-47 (GHTGSGKS) contacts ATP.

This sequence belongs to the ABC transporter superfamily. Energy-coupling factor EcfA family. In terms of assembly, forms a stable energy-coupling factor (ECF) transporter complex composed of 2 membrane-embedded substrate-binding proteins (S component), 2 ATP-binding proteins (A component) and 2 transmembrane proteins (T component).

It localises to the cell membrane. Its function is as follows. ATP-binding (A) component of a common energy-coupling factor (ECF) ABC-transporter complex. Unlike classic ABC transporters this ECF transporter provides the energy necessary to transport a number of different substrates. The protein is Energy-coupling factor transporter ATP-binding protein EcfA2 of Latilactobacillus sakei subsp. sakei (strain 23K) (Lactobacillus sakei subsp. sakei).